The chain runs to 147 residues: Globin, polymeric component P2 (147 aa).

The region spanning P2–E146 is the Globin domain. H96 lines the heme b pocket.

The protein belongs to the globin family. In terms of assembly, polymer.

The polypeptide is Globin, polymeric component P2 (Glycera dibranchiata (Bloodworm)).